The chain runs to 831 residues: METVVNQIKSKLPENLEGLLDLAYNYWWSWNRRATKLWEKIDPEHWWEYKNPVKLLLDTPEERLKELSKDDDFINLYELVIDQFRHYMNPESTWFSTNYPKWEEPVIYLCMEYGISKSLPIYSGGLGILAGDHIKTASDLGIPLIAIGLLYKHGYFKQEIDKDGKQIEVFPEYNPEEMPIKPLTTEKGKPLLIEVPIEDRIVYARAFEVNVGRVKLYLLDTDVPQNSPDDRTICDYLYNAEIDKRIKQEILLGIGGMRLLRMLGIDPAVIHLNEGHPAFANFQRIAWYMEEGLNFLEALTVVRGTTIFTTHTPVPAGHDKFPIAEVEKRLAKFLEGLPKDEFLNLGREGDQFNMTLLSIRTSSYVNAVSKLHSKVTKEMWRHLWNGVPLDEIPVEGITNGVHTKTWLHNEIKKLVDRYIGRVWRDYAELEGLWYGVERIPDEELWEAHLKAKREFIELIKRKIKERNERLGIEEPLPEIDENALIIGFARRFATYKRATLILTDLERLKKIVNNPERPVYIIFGGKAHPRDEAGKEFLRKVYEVSQMPEFKNKIMVFENYDMGSARAMVAGVDVWLNNPRRPLEASGTSGMKAGLNGVLNLSVYDGWWVEGYNGKNGWVIGDESLEPETEKDNIRDAQSLYNLLENEVIPTYYENRARWIYMMKESIKSIAPRFSTHRMVKEYVDKFYSKALANAILLQRDSFKATREIASWKAKIFNSWDKVEIERIITHDATGVEVIVNLDGLSPEDVKVEIYYGVKAEGYAIEKPYVIELKHPQSLGGNRWLYRYEGNALKNLGHPCWHYAVRVYPYHDKLPHKFLLGLIKWKGFFEL.

Lys592 is subject to N6-(pyridoxal phosphate)lysine.

The protein belongs to the glycogen phosphorylase family. Trimer (at 25 degrees Celsius). It depends on pyridoxal 5'-phosphate as a cofactor.

The catalysed reaction is [(1-&gt;4)-alpha-D-glucosyl](n) + phosphate = [(1-&gt;4)-alpha-D-glucosyl](n-1) + alpha-D-glucose 1-phosphate. Functionally, phosphorylase is an important allosteric enzyme in carbohydrate metabolism. Catalyzes the phospholytic cleavage of maltodextrins with a minimal chain length of five glucose residues to yield glucose-1-phosphate. Low activity with tetraose and no activity with triose and maltose. Long maltodextrins (8 to 15 glucose units), amylose and starch are not as good substrates as maltoheptaose. This chain is Maltodextrin phosphorylase (malP), found in Thermococcus litoralis (strain ATCC 51850 / DSM 5473 / JCM 8560 / NS-C).